A 785-amino-acid chain; its full sequence is Endonuclease MutS2 (785 aa).

335–342 (GPNTGGKT) is a binding site for ATP. Residues 710–785 (LDLRGERYED…GNGVTIVEFK (76 aa)) enclose the Smr domain.

The protein belongs to the DNA mismatch repair MutS family. MutS2 subfamily. As to quaternary structure, homodimer. Binds to stalled ribosomes, contacting rRNA.

Endonuclease that is involved in the suppression of homologous recombination and thus may have a key role in the control of bacterial genetic diversity. In terms of biological role, acts as a ribosome collision sensor, splitting the ribosome into its 2 subunits. Detects stalled/collided 70S ribosomes which it binds and splits by an ATP-hydrolysis driven conformational change. Acts upstream of the ribosome quality control system (RQC), a ribosome-associated complex that mediates the extraction of incompletely synthesized nascent chains from stalled ribosomes and their subsequent degradation. Probably generates substrates for RQC. This is Endonuclease MutS2 from Listeria monocytogenes serotype 4a (strain HCC23).